The primary structure comprises 225 residues: Thymocyte nuclear protein 1 (225 aa).

Residues Met1 to Lys47 are disordered. The Nuclear localization signal motif lies at Arg5–Gly10. The span at Thr23–Asn39 shows a compositional bias: basic and acidic residues.

In terms of processing, phosphorylated.

The protein localises to the nucleus. Its function is as follows. Specifically binds 5-hydroxymethylcytosine (5hmC), suggesting that it acts as a specific reader of 5hmC. The chain is Thymocyte nuclear protein 1 (THYN1) from Homo sapiens (Human).